Here is a 613-residue protein sequence, read N- to C-terminus: Zinc metalloproteinase-disintegrin-like atragin (613 aa).

The N-terminal stretch at Met1–Ser20 is a signal peptide. Positions Ile21 to Leu191 are excised as a propeptide. A Peptidase M12B domain is found at Lys205–Pro400. Ca(2+) contacts are provided by Glu208 and Asp292. 2 disulfides stabilise this stretch: Cys316–Cys395 and Cys356–Cys379. Zn(2+) is bound by residues His341, His345, and His351. Residues Cys395, Asn398, Ile410, Asn413, Phe415, Glu417, Glu420, and Asp423 each coordinate Ca(2+). The 87-residue stretch at Pro408–Asn494 folds into the Disintegrin domain. Cystine bridges form between Cys411–Cys440, Cys422–Cys435, Cys424–Cys430, Cys434–Cys457, Cys448–Cys454, Cys453–Cys479, Cys466–Cys486, Cys473–Cys505, Cys498–Cys510, Cys517–Cys567, Cys532–Cys575, Cys542–Cys577, Cys545–Cys555, Cys562–Cys601, and Cys595–Cys606. N-linked (GlcNAc...) asparagine glycosylation occurs at Asn436. Positions Asp472–Asp474 match the D/ECD-tripeptide motif. The Ca(2+) site is built by Asp474, Leu475, Glu477, Asp489, and Val490. The tract at residues Val560–Ile574 is hypervariable region that may play important roles toward cell migration.

The protein belongs to the venom metalloproteinase (M12B) family. P-III subfamily. P-IIIa sub-subfamily. As to quaternary structure, monomer. Zn(2+) is required as a cofactor. As to expression, expressed by the venom gland.

It localises to the secreted. Functionally, snake venom zinc metalloproteinase that seems to inhibit cell migration. This activity is dominated by the local structure of the hyper-variable region. The sequence is that of Zinc metalloproteinase-disintegrin-like atragin from Naja atra (Chinese cobra).